The following is a 319-amino-acid chain: Replication factor C small subunit (319 aa).

G45–T52 lines the ATP pocket.

Belongs to the activator 1 small subunits family. RfcS subfamily. Heteropentamer composed of four small subunits (RfcS) and one large subunit (RfcL). Both subunits interact with PCNA.

Its function is as follows. Part of the RFC clamp loader complex which loads the PCNA sliding clamp onto DNA. The complex possesses DNA-dependent ATPase activity which is further stimulated by PCNA. This Archaeoglobus fulgidus (strain ATCC 49558 / DSM 4304 / JCM 9628 / NBRC 100126 / VC-16) protein is Replication factor C small subunit (rfcS).